The sequence spans 416 residues: MQVTLKTLQQQTFKIDIDPEETVKALKEKIESEKGKDAFPVAGQKLIYAGKILSDDTALKEYKIDEKNFVVVMVTKPKAVTTAVPATTQPSSTPSPTAVSSSPAVAAAQAPAPTPALPPTSTPASTAPASTTASSEPAPAGATQPEKPAEKPAQTPVLTSPAPADSTPGDSSRSNLFEDATSALVTGQSYENMVTEIMSMGYEREQVIAALRASFNNPDRAVEYLLMGIPGDRESQAVVDPPPQAVSTGTPQSPAVAAAAATTTATTTTTSGGHPLEFLRNQPQFQQMRQIIQQNPSLLPALLQQIGRENPQLLQQISQHQEHFIQMLNEPVQEAGSQGGGGGGGGGGGGGGGGGIAEAGSGHMNYIQVTPQEKEAIERLKALGFPEGLVIQAYFACEKNENLAANFLLQQNFDED.

The Ubiquitin-like domain maps to methionine 1–alanine 79. A compositionally biased stretch (low complexity) spans alanine 83–proline 111. The tract at residues alanine 83–asparagine 175 is disordered. Residues alanine 112 to serine 121 show a composition bias toward pro residues. Positions threonine 122–threonine 143 are enriched in low complexity. Threonine 155 bears the Phosphothreonine mark. Residues serine 160 and serine 174 each carry the phosphoserine modification. Threonine 186 is subject to Phosphothreonine. A UBA 1 domain is found at glutamine 188–glycine 228. Serine 199 carries the phosphoserine modification. Tyrosine 202 carries the post-translational modification Phosphotyrosine. Residues histidine 274 to isoleucine 317 form the STI1 domain. Positions glutamine 333–isoleucine 356 are disordered. Positions serine 337–isoleucine 356 are enriched in gly residues. A UBA 2 domain is found at proline 371–glutamine 411.

This sequence belongs to the RAD23 family. In terms of assembly, component of the XPC complex composed of XPC, RAD23B and CETN2. Interacts with NGLY1 and PSMC1. Interacts with ATXN3. Interacts with AMFR. Interacts with VCP; the interaction is indirect and mediated by NGLY1.

The protein localises to the nucleus. Its subcellular location is the cytoplasm. In terms of biological role, multiubiquitin chain receptor involved in modulation of proteasomal degradation. Binds to polyubiquitin chains. Proposed to be capable to bind simultaneously to the 26S proteasome and to polyubiquitinated substrates and to deliver ubiquitinated proteins to the proteasome. May play a role in endoplasmic reticulum-associated degradation (ERAD) of misfolded glycoproteins by association with PNGase and delivering deglycosylated proteins to the proteasome. Its function is as follows. Involved in global genome nucleotide excision repair (GG-NER) by acting as component of the XPC complex. Cooperatively with Cetn2 appears to stabilize Xpc. May protect Xpc from proteasomal degradation. Functionally, the XPC complex is proposed to represent the first factor bound at the sites of DNA damage and together with other core recognition factors, Xpa, RPA and the TFIIH complex, is part of the pre-incision (or initial recognition) complex. The XPC complex recognizes a wide spectrum of damaged DNA characterized by distortions of the DNA helix such as single-stranded loops, mismatched bubbles or single-stranded overhangs. The orientation of XPC complex binding appears to be crucial for inducing a productive NER. XPC complex is proposed to recognize and to interact with unpaired bases on the undamaged DNA strand which is followed by recruitment of the TFIIH complex and subsequent scanning for lesions in the opposite strand in a 5'-to-3' direction by the NER machinery. Cyclobutane pyrimidine dimers (CPDs) which are formed upon UV-induced DNA damage esacpe detection by the XPC complex due to a low degree of structural perurbation. Instead they are detected by the UV-DDB complex which in turn recruits and cooperates with the XPC complex in the respective DNA repair. In vitro, the Xpc:Rad23b dimer is sufficient to initiate NER; it preferentially binds to cisplatin and UV-damaged double-stranded DNA and also binds to a variety of chemically and structurally diverse DNA adducts. Xpc:Rad23b contacts DNA both 5' and 3' of a cisplatin lesion with a preference for the 5' side. Xpc:Rad23bB induces a bend in DNA upon binding. Xpc:Rad23b stimulates the activity of DNA glycosylases Tdg and Smug1. This Mus musculus (Mouse) protein is UV excision repair protein RAD23 homolog B (Rad23b).